The sequence spans 261 residues: Phosphate import ATP-binding protein PstB (261 aa).

One can recognise an ABC transporter domain in the interval 15–256 (LQVRRLNFYY…PAHQETENYI (242 aa)). 47–54 (GPSGCGKS) contacts ATP.

This sequence belongs to the ABC transporter superfamily. Phosphate importer (TC 3.A.1.7) family. In terms of assembly, the complex is composed of two ATP-binding proteins (PstB), two transmembrane proteins (PstC and PstA) and a solute-binding protein (PstS).

It localises to the cell inner membrane. The enzyme catalyses phosphate(out) + ATP + H2O = ADP + 2 phosphate(in) + H(+). In terms of biological role, part of the ABC transporter complex PstSACB involved in phosphate import. Responsible for energy coupling to the transport system. This chain is Phosphate import ATP-binding protein PstB, found in Burkholderia sp.